The chain runs to 358 residues: tRNA-specific 2-thiouridylase MnmA (358 aa).

ATP is bound by residues 6-13 and M32; that span reads ALSGGVDS. The active-site Nucleophile is C103. A disulfide bridge connects residues C103 and C201. An ATP-binding site is contributed by G127. The interaction with tRNA stretch occupies residues 151 to 153; that stretch reads KDQ. The active-site Cysteine persulfide intermediate is the C201.

Belongs to the MnmA/TRMU family.

Its subcellular location is the cytoplasm. It carries out the reaction S-sulfanyl-L-cysteinyl-[protein] + uridine(34) in tRNA + AH2 + ATP = 2-thiouridine(34) in tRNA + L-cysteinyl-[protein] + A + AMP + diphosphate + H(+). Its function is as follows. Catalyzes the 2-thiolation of uridine at the wobble position (U34) of tRNA, leading to the formation of s(2)U34. The polypeptide is tRNA-specific 2-thiouridylase MnmA (Thermotoga petrophila (strain ATCC BAA-488 / DSM 13995 / JCM 10881 / RKU-1)).